The primary structure comprises 327 residues: MFGKQDKMDVRCSTETEANRVSKNGHKEGKDSKGAEGNISTSFLKEQQGTFSASAATEDCNKSKSGSADPDYCRRILVRDAKGSIREIILPKGLDLDRPKRTRTSFTAEQLYRLEMEFQRCQYVVGRERTELARQLNLSETQVKVWFQNRRTKQKKDQGKDSELRSVVSETAATCSVLRLLEQGRLLSPPGLPGLLPPCASGALGSALRGPGLAAGSGTAAAAAAAAAAAPAGGSPHPPSAGTAAGPPPPAALHGAAAAAAGHGLFGLPVPTLLGSVAGRLSSAPLAVAGSLAGNLQELSARYLSSSAFEPYSRTNNKESAEKKALD.

Positions 1-34 (MFGKQDKMDVRCSTETEANRVSKNGHKEGKDSKG) are enriched in basic and acidic residues. The interval 1–41 (MFGKQDKMDVRCSTETEANRVSKNGHKEGKDSKGAEGNIST) is disordered. Residues 99-158 (PKRTRTSFTAEQLYRLEMEFQRCQYVVGRERTELARQLNLSETQVKVWFQNRRTKQKKDQ) constitute a DNA-binding region (homeobox). Over residues 230–245 (APAGGSPHPPSAGTAA) the composition is skewed to low complexity. The segment at 230 to 249 (APAGGSPHPPSAGTAAGPPP) is disordered.

It belongs to the EMX homeobox family.

It localises to the nucleus. Its function is as follows. Transcription factor that plays a role in establishing dorsal-ventral polarity in the neural retina. The protein is Ventral anterior homeobox 1 (VAX1) of Gallus gallus (Chicken).